The primary structure comprises 194 residues: Imidazoleglycerol-phosphate dehydratase (194 aa).

It belongs to the imidazoleglycerol-phosphate dehydratase family.

The protein resides in the cytoplasm. The catalysed reaction is D-erythro-1-(imidazol-4-yl)glycerol 3-phosphate = 3-(imidazol-4-yl)-2-oxopropyl phosphate + H2O. The protein operates within amino-acid biosynthesis; L-histidine biosynthesis; L-histidine from 5-phospho-alpha-D-ribose 1-diphosphate: step 6/9. The sequence is that of Imidazoleglycerol-phosphate dehydratase from Listeria welshimeri serovar 6b (strain ATCC 35897 / DSM 20650 / CCUG 15529 / CIP 8149 / NCTC 11857 / SLCC 5334 / V8).